Here is a 456-residue protein sequence, read N- to C-terminus: Glycine--tRNA ligase (456 aa).

Positions 98 and 168 each coordinate substrate. ATP-binding positions include 200 to 202, 210 to 215, 285 to 286, and 329 to 332; these read RNE, FRTREF, EL, and GVER. Residue 215–219 participates in substrate binding; the sequence is FEQME. Position 325–329 (325–329) interacts with substrate; sequence EPSVG.

It belongs to the class-II aminoacyl-tRNA synthetase family. In terms of assembly, homodimer.

The protein localises to the cytoplasm. It carries out the reaction tRNA(Gly) + glycine + ATP = glycyl-tRNA(Gly) + AMP + diphosphate. Functionally, catalyzes the attachment of glycine to tRNA(Gly). The protein is Glycine--tRNA ligase of Mycoplasma mycoides subsp. mycoides SC (strain CCUG 32753 / NCTC 10114 / PG1).